The following is a 273-amino-acid chain: Large ribosomal subunit protein uL2 (273 aa).

Disordered regions lie at residues 30-50 (YAPL…GRIT) and 221-273 (RGTA…RRGK). Over residues 253–273 (KGKKTRHNKRTDKFIVRRRGK) the composition is skewed to basic residues.

Belongs to the universal ribosomal protein uL2 family. Part of the 50S ribosomal subunit. Forms a bridge to the 30S subunit in the 70S ribosome.

Its function is as follows. One of the primary rRNA binding proteins. Required for association of the 30S and 50S subunits to form the 70S ribosome, for tRNA binding and peptide bond formation. It has been suggested to have peptidyltransferase activity; this is somewhat controversial. Makes several contacts with the 16S rRNA in the 70S ribosome. This chain is Large ribosomal subunit protein uL2, found in Pasteurella multocida (strain Pm70).